A 39-amino-acid chain; its full sequence is RapF inhibitor (39 aa).

A propeptide spanning residues 1–34 (MKLKSKLLLSCLALSTVFVATTIANAPTHQIEVA) is cleaved from the precursor.

Belongs to the Phr family. As to quaternary structure, interacts with RapF and inhibits its interaction with ComA. Contains a predicted signal peptide cleavage site in the N-terminal region, however the propeptide is probably subject to only one processing event, at the N-terminal end of the mature peptide.

It is found in the secreted. The protein resides in the cytoplasm. Signaling molecule involved in the regulation of genetic competence development. Secreted during production, but the mature peptide acts intracellularly, indicating that it needs to be imported into the cell to function. Stimulates expression of the genes controlled by ComA, a transcriptional factor that regulates the development of genetic competence. Acts by inhibiting RapF, which regulates the activity of ComA. The sequence is that of RapF inhibitor (phrF) from Bacillus subtilis (strain 168).